We begin with the raw amino-acid sequence, 257 residues long: Nickel import system ATP-binding protein NikD (257 aa).

Positions 4 to 245 (IDIQNLTIKN…HLHPYTERLI (242 aa)) constitute an ABC transporter domain. ATP is bound at residue 37–44 (GESGAGKS).

This sequence belongs to the ABC transporter superfamily. As to quaternary structure, the complex is composed of two ATP-binding proteins (NikD and NikE), two transmembrane proteins (NikB and NikC) and a solute-binding protein (NikA).

The protein localises to the cell membrane. It catalyses the reaction Ni(2+)(out) + ATP + H2O = Ni(2+)(in) + ADP + phosphate + H(+). Functionally, part of the ABC transporter complex NikABCDE (Opp2) involved in nickel import. Probably responsible for energy coupling to the transport system. In Staphylococcus aureus (strain Mu50 / ATCC 700699), this protein is Nickel import system ATP-binding protein NikD.